We begin with the raw amino-acid sequence, 117 residues long: CUE domain-containing protein CUE4 (117 aa).

The disordered stretch occupies residues 27–74 (QVPSRTVQDAKPAPSVATNDPSPEPVPSAPEERVARLNRHGSDRKRAV). Residue lysine 37 forms a Glycyl lysine isopeptide (Lys-Gly) (interchain with G-Cter in ubiquitin) linkage. Serine 48 bears the Phosphoserine mark. Residues 56–74 (PEERVARLNRHGSDRKRAV) show a composition bias toward basic and acidic residues. The 43-residue stretch at 74–116 (VNSDMVEIVMTMAPHVPQEKVVQDLRNTGSIEHTMENIFAGKL) folds into the CUE domain.

Post-translationally, ubiquitinated.

The protein resides in the cytoplasm. The protein localises to the endoplasmic reticulum. In Saccharomyces cerevisiae (strain ATCC 204508 / S288c) (Baker's yeast), this protein is CUE domain-containing protein CUE4 (CUE4).